Consider the following 151-residue polypeptide: Sec-independent protein translocase protein TatB (151 aa).

A helical transmembrane segment spans residues 1–21 (MFDIGFLELLICGVIALLVLG). Basic and acidic residues-rich tracts occupy residues 87–99 (KYEHMILPDDQTR) and 122–132 (EPPHEPVRDEA). Residues 87-151 (KYEHMILPDD…SPTSPSDKYS (65 aa)) are disordered. Low complexity predominate over residues 134–151 (ASDQPSDSSPTSPSDKYS).

Belongs to the TatB family. As to quaternary structure, the Tat system comprises two distinct complexes: a TatABC complex, containing multiple copies of TatA, TatB and TatC subunits, and a separate TatA complex, containing only TatA subunits. Substrates initially bind to the TatABC complex, which probably triggers association of the separate TatA complex to form the active translocon.

It is found in the cell inner membrane. Part of the twin-arginine translocation (Tat) system that transports large folded proteins containing a characteristic twin-arginine motif in their signal peptide across membranes. Together with TatC, TatB is part of a receptor directly interacting with Tat signal peptides. TatB may form an oligomeric binding site that transiently accommodates folded Tat precursor proteins before their translocation. The chain is Sec-independent protein translocase protein TatB from Marinobacter nauticus (strain ATCC 700491 / DSM 11845 / VT8) (Marinobacter aquaeolei).